The primary structure comprises 696 residues: DNA ligase (696 aa).

NAD(+)-binding positions include 36–40 (DAEYD), 85–86 (SL), and glutamate 123. Lysine 125 serves as the catalytic N6-AMP-lysine intermediate. NAD(+) is bound by residues arginine 146, glutamate 181, lysine 319, and lysine 343. Zn(2+)-binding residues include cysteine 437, cysteine 440, cysteine 455, and cysteine 461. One can recognise a BRCT domain in the interval 618–696 (PEGTSLAGKT…EDGLKALLGL (79 aa)).

This sequence belongs to the NAD-dependent DNA ligase family. LigA subfamily. It depends on Mg(2+) as a cofactor. The cofactor is Mn(2+).

It carries out the reaction NAD(+) + (deoxyribonucleotide)n-3'-hydroxyl + 5'-phospho-(deoxyribonucleotide)m = (deoxyribonucleotide)n+m + AMP + beta-nicotinamide D-nucleotide.. Functionally, DNA ligase that catalyzes the formation of phosphodiester linkages between 5'-phosphoryl and 3'-hydroxyl groups in double-stranded DNA using NAD as a coenzyme and as the energy source for the reaction. It is essential for DNA replication and repair of damaged DNA. The protein is DNA ligase of Bordetella pertussis (strain Tohama I / ATCC BAA-589 / NCTC 13251).